A 213-amino-acid chain; its full sequence is Holliday junction branch migration complex subunit RuvA (213 aa).

Residues 1–64 (MIASVTGEVA…DEAPLLFGFA (64 aa)) form a domain I region. The tract at residues 65–143 (QGDEKEIFTV…LPEPPVQQAN (79 aa)) is domain II. The flexible linker stretch occupies residues 144–152 (QPQVPVWRD). The segment at 152 to 213 (DQVVDALTGL…GTTHAPTGRR (62 aa)) is domain III.

This sequence belongs to the RuvA family. Homotetramer. Forms an RuvA(8)-RuvB(12)-Holliday junction (HJ) complex. HJ DNA is sandwiched between 2 RuvA tetramers; dsDNA enters through RuvA and exits via RuvB. An RuvB hexamer assembles on each DNA strand where it exits the tetramer. Each RuvB hexamer is contacted by two RuvA subunits (via domain III) on 2 adjacent RuvB subunits; this complex drives branch migration. In the full resolvosome a probable DNA-RuvA(4)-RuvB(12)-RuvC(2) complex forms which resolves the HJ.

It localises to the cytoplasm. In terms of biological role, the RuvA-RuvB-RuvC complex processes Holliday junction (HJ) DNA during genetic recombination and DNA repair, while the RuvA-RuvB complex plays an important role in the rescue of blocked DNA replication forks via replication fork reversal (RFR). RuvA specifically binds to HJ cruciform DNA, conferring on it an open structure. The RuvB hexamer acts as an ATP-dependent pump, pulling dsDNA into and through the RuvAB complex. HJ branch migration allows RuvC to scan DNA until it finds its consensus sequence, where it cleaves and resolves the cruciform DNA. In Kocuria rhizophila (strain ATCC 9341 / DSM 348 / NBRC 103217 / DC2201), this protein is Holliday junction branch migration complex subunit RuvA.